The chain runs to 513 residues: Histidine ammonia-lyase (513 aa).

Residues 144–146 (ASG) constitute a cross-link (5-imidazolinone (Ala-Gly)). The residue at position 145 (S145) is a 2,3-didehydroalanine (Ser).

It belongs to the PAL/histidase family. Post-translationally, contains an active site 4-methylidene-imidazol-5-one (MIO), which is formed autocatalytically by cyclization and dehydration of residues Ala-Ser-Gly.

The protein resides in the cytoplasm. The enzyme catalyses L-histidine = trans-urocanate + NH4(+). The protein operates within amino-acid degradation; L-histidine degradation into L-glutamate; N-formimidoyl-L-glutamate from L-histidine: step 1/3. The polypeptide is Histidine ammonia-lyase (Streptococcus pyogenes serotype M18 (strain MGAS8232)).